Consider the following 267-residue polypeptide: Indole-3-glycerol phosphate synthase (267 aa).

This sequence belongs to the TrpC family.

It carries out the reaction 1-(2-carboxyphenylamino)-1-deoxy-D-ribulose 5-phosphate + H(+) = (1S,2R)-1-C-(indol-3-yl)glycerol 3-phosphate + CO2 + H2O. It functions in the pathway amino-acid biosynthesis; L-tryptophan biosynthesis; L-tryptophan from chorismate: step 4/5. This chain is Indole-3-glycerol phosphate synthase, found in Deinococcus radiodurans (strain ATCC 13939 / DSM 20539 / JCM 16871 / CCUG 27074 / LMG 4051 / NBRC 15346 / NCIMB 9279 / VKM B-1422 / R1).